The chain runs to 181 residues: RNA pyrophosphohydrolase (181 aa).

The region spanning 6–150 is the Nudix hydrolase domain; it reads GYRPNVGIII…KCEVYRCALK (145 aa). A Nudix box motif is present at residues 38-59; sequence GGIKEGETPEQAMYRELYEEVG.

This sequence belongs to the Nudix hydrolase family. RppH subfamily. A divalent metal cation serves as cofactor.

Its function is as follows. Accelerates the degradation of transcripts by removing pyrophosphate from the 5'-end of triphosphorylated RNA, leading to a more labile monophosphorylated state that can stimulate subsequent ribonuclease cleavage. This Psychromonas ingrahamii (strain DSM 17664 / CCUG 51855 / 37) protein is RNA pyrophosphohydrolase.